The primary structure comprises 214 residues: MTSLFKKKTVDDVIKEQNKELRGTQRQIARDRTALEKQEKQLEMEIKKMAKTGNRDACKVLAKQLVQVRKQKTRTYAVSSKVTSMSTQTKLMNSQMKMAGAMATTTKTMQAVNKKMDPKKTMQTLQNFQKETAKMDMTEEMMNDTLDEIFEDSGDEEESQDIVNQVLDEIGIEISGKMAHAPSAARKTPSAATAKADGISDEDIERQLKALGVD.

Residues 25–55 (QRQIARDRTALEKQEKQLEMEIKKMAKTGNR) are a coiled coil. The tract at residues 178–199 (MAHAPSAARKTPSAATAKADGI) is disordered. An MIT-interacting motif motif is present at residues 202-212 (EDIERQLKALG).

It belongs to the SNF7 family. As to quaternary structure, probable core component of the endosomal sorting required for transport complex III (ESCRT-III). ESCRT-III components are thought to multimerize to form a flat lattice on the perimeter membrane of the endosome.

The protein localises to the cytoplasm. It is found in the cytosol. It localises to the late endosome membrane. Probable core component of the endosomal sorting required for transport complex III (ESCRT-III) which is involved in multivesicular bodies (MVBs) formation and sorting of endosomal cargo proteins into MVBs. MVBs contain intraluminal vesicles (ILVs) that are generated by invagination and scission from the limiting membrane of the endosome and mostly are delivered to lysosomes enabling degradation of membrane proteins, such as stimulated growth factor receptors, lysosomal enzymes and lipids. The sequence is that of Charged multivesicular body protein 2b (chmp2b) from Danio rerio (Zebrafish).